A 160-amino-acid polypeptide reads, in one-letter code: Nascent polypeptide-associated complex subunit alpha (160 aa).

The NAC-A/B domain maps to 10 to 75 (TKGEKKTREA…HSFDDIASRL (66 aa)). One can recognise a UBA domain in the interval 120-159 (VNPKDVEVVMKETKASREKVVETLIATKNDLVSAVLELTT).

This sequence belongs to the NAC-alpha family. As to quaternary structure, part of the nascent polypeptide-associated complex (NAC), consisting of nacA and nacB.

The protein resides in the cytoplasm. It is found in the nucleus. Functionally, component of the nascent polypeptide-associated complex (NAC), a dynamic component of the ribosomal exit tunnel, protecting the emerging polypeptides from interaction with other cytoplasmic proteins to ensure appropriate nascent protein targeting. The NAC complex also promotes mitochondrial protein import by enhancing productive ribosome interactions with the outer mitochondrial membrane and blocks the inappropriate interaction of ribosomes translating non-secretory nascent polypeptides with translocation sites in the membrane of the endoplasmic reticulum. May also be involved in transcription regulation. The chain is Nascent polypeptide-associated complex subunit alpha (nacA) from Dictyostelium discoideum (Social amoeba).